The sequence spans 347 residues: MATQAAPASGVRNGAGPEWGGFEENIQGGGSAVIDMENMDDTSGSSFEDMGELHQRLREEEVDADAAAAEEEDGEFLGMKGFKGQLSRQVADQMWQAGKRQASKAFSLYANIDILRPYFDVEPAQVRSRLLESMIPIKMVNFPQKVAGELYGPLMLVFTLVAILLHGMKTSDTIIREGTLMGTAIGTCFGYWLGVSSFIYFLAYLCNAQITMLQMLALLGYGLFGHCIVLFITYNIHLHALFYLFWLLLGGLSTLRMVAVLVSRTVGPTQRLLLCGTLAALHMLFLLYLHFAYHKVVEGILDTLEGPNIPPMQRVPRDIPAVLPAAKLPVAVVNATAKAIAVTLQSH.

Positions 1–28 (MATQAAPASGVRNGAGPEWGGFEENIQG) are disordered. Residue alanine 2 is modified to N-acetylalanine. Residues 2–145 (ATQAAPASGV…PIKMVNFPQK (144 aa)) are Cytoplasmic-facing. A helical transmembrane segment spans residues 146–166 (VAGELYGPLMLVFTLVAILLH). At 167-184 (GMKTSDTIIREGTLMGTA) the chain is on the lumenal side. Residues 185 to 205 (IGTCFGYWLGVSSFIYFLAYL) form a helical membrane-spanning segment. Residues 206 to 211 (CNAQIT) are Cytoplasmic-facing. Residues 212–234 (MLQMLALLGYGLFGHCIVLFITY) form a helical membrane-spanning segment. The Lumenal segment spans residues 235-237 (NIH). A helical membrane pass occupies residues 238–260 (LHALFYLFWLLLGGLSTLRMVAV). The Cytoplasmic portion of the chain corresponds to 261-271 (LVSRTVGPTQR). The chain crosses the membrane as a helical span at residues 272 to 292 (LLLCGTLAALHMLFLLYLHFA). Residues 293 to 347 (YHKVVEGILDTLEGPNIPPMQRVPRDIPAVLPAAKLPVAVVNATAKAIAVTLQSH) lie on the Lumenal side of the membrane. N-linked (GlcNAc...) asparagine glycosylation is present at asparagine 334.

The protein belongs to the YIP1 family. As to quaternary structure, interacts with YIPF4 and YIPF5.

The protein localises to the cell membrane. It is found in the golgi apparatus. It localises to the cis-Golgi network membrane. The protein resides in the cytoplasm. Functionally, involved in the maintenance of the Golgi structure. May play a role in hematopoiesis. The chain is Protein YIPF3 (Yipf3) from Rattus norvegicus (Rat).